The primary structure comprises 102 residues: Large ribosomal subunit protein bL21 (102 aa).

It belongs to the bacterial ribosomal protein bL21 family. In terms of assembly, part of the 50S ribosomal subunit. Contacts protein L20.

Its function is as follows. This protein binds to 23S rRNA in the presence of protein L20. This chain is Large ribosomal subunit protein bL21, found in Macrococcus caseolyticus (strain JCSC5402) (Macrococcoides caseolyticum).